We begin with the raw amino-acid sequence, 179 residues long: Large ribosomal subunit protein uL5 (179 aa).

This sequence belongs to the universal ribosomal protein uL5 family. Part of the 50S ribosomal subunit; part of the 5S rRNA/L5/L18/L25 subcomplex. Contacts the 5S rRNA and the P site tRNA. Forms a bridge to the 30S subunit in the 70S ribosome.

Functionally, this is one of the proteins that bind and probably mediate the attachment of the 5S RNA into the large ribosomal subunit, where it forms part of the central protuberance. In the 70S ribosome it contacts protein S13 of the 30S subunit (bridge B1b), connecting the 2 subunits; this bridge is implicated in subunit movement. Contacts the P site tRNA; the 5S rRNA and some of its associated proteins might help stabilize positioning of ribosome-bound tRNAs. This is Large ribosomal subunit protein uL5 from Desulfosudis oleivorans (strain DSM 6200 / JCM 39069 / Hxd3) (Desulfococcus oleovorans).